Consider the following 423-residue polypeptide: Polyglutamylase complex subunit TTLL1 (423 aa).

Residues 1–367 form the TTL domain; that stretch reads MAGRVKWVTD…NGEIPDCKWN (367 aa). ATP-binding positions include K138, 144–145, 181–184, and 194–196; these read QG, SVYI, and KFD. A protein is bound at residue Q144. Residue R220 coordinates L-glutamate. Residue 241–242 participates in ATP binding; the sequence is TN. Residue K259 participates in L-glutamate binding. Mg(2+) is bound by residues D313, E326, and N328. An L-glutamate-binding site is contributed by K344. The disordered stretch occupies residues 390-423; that stretch reads DGAERELRNRPGQPVGPRAGRSRDSGRSVLTTWK.

This sequence belongs to the tubulin polyglutamylase family. Part of the neuronal tubulin polyglutamylase complex which contains TPGS1, TPGS2, TTLL1, LRRC49 and NICN1. Interacts with PCM1, CSTPP1 and LRRC49. Requires Mg(2+) as cofactor. As to expression, highly expressed in brain, heart and kidney. Expressed in liver, lung, muscle, spleen, testis and trachea. In the brain, expressed in ependymal cilia, cortex, corpus callosum and striatum. Expressed in blastomere.

Its subcellular location is the cytoplasm. The protein resides in the cytoskeleton. The protein localises to the cilium basal body. It is found in the cilium axoneme. It localises to the cell projection. Its subcellular location is the cilium. The protein resides in the flagellum. It catalyses the reaction (L-glutamyl)(n)-gamma-L-glutamyl-L-glutamyl-[protein] + L-glutamate + ATP = (L-glutamyl)(n+1)-gamma-L-glutamyl-L-glutamyl-[protein] + ADP + phosphate + H(+). Catalytic subunit of a polyglutamylase complex which modifies tubulin, generating side chains of glutamate on the gamma-carboxyl group of specific glutamate residues within the C-terminal tail of tubulin. Probably involved in the side-chain elongation step of the polyglutamylation reaction rather than the initiation step. Modifies both alpha- and beta-tubulins with a preference for the alpha-tail. Unlike most polyglutamylases of the tubulin--tyrosine ligase family, only displays a catalytic activity when in complex with other proteins as it is most likely lacking domains important for autonomous activity. Part of the neuronal tubulin polyglutamylase complex. Mediates cilia and flagella polyglutamylation which is essential for their biogenesis and motility. Involved in respiratory motile cilia function through the regulation of beating asymmetry. Essential for sperm flagella biogenesis, motility and male fertility. Also mediates glutamylation of non-tubulin proteins. Involved in KLF4 glutamylation which impedes its ubiquitination, thereby leading to somatic cell reprogramming, pluripotency maintenance and embryogenesis. This chain is Polyglutamylase complex subunit TTLL1, found in Mus musculus (Mouse).